We begin with the raw amino-acid sequence, 486 residues long: FAD-dependent oxidoreductase domain-containing protein 1 (486 aa).

A helical transmembrane segment spans residues 66–82 (VVIVGGGVLGLSVAYWL).

In terms of assembly, associates with components of the mitochondrial respiratory chain complex I. It depends on FAD as a cofactor.

The protein localises to the mitochondrion inner membrane. Required for the assembly of the mitochondrial membrane respiratory chain NADH dehydrogenase (Complex I). Involved in mid-late stages of complex I assembly. This is FAD-dependent oxidoreductase domain-containing protein 1 (FOXRED1) from Bos taurus (Bovine).